The sequence spans 225 residues: Perlwapin-like protein (225 aa).

A signal peptide spans 1-19 (MNHLWLFIVTVSCIYLVYG). 4 disulfides stabilise this stretch: cysteine 27/cysteine 57, cysteine 36/cysteine 61, cysteine 43/cysteine 56, and cysteine 49/cysteine 65. The WAP 1; atypical domain occupies 27 to 68 (CKVKFMGTACPLGRLVCEEDGDCLGVNQVCCYDGCGTTCHNK). A glycan (N-linked (GlcNAc...) asparagine) is linked at asparagine 67. Residues 117-169 (IIPSPELLCPVVTVRYAFCRFSTYTPCHTSNDCAVPGMKCCPDVCGKRCKFPI) enclose the WAP 2 domain. 4 disulfides stabilise this stretch: cysteine 125-cysteine 157, cysteine 135-cysteine 161, cysteine 143-cysteine 156, and cysteine 149-cysteine 165. The N-linked (GlcNAc...) asparagine glycan is linked to asparagine 170. The tract at residues 176–225 (QFQQTPLKPTVPLPQYQQTPLQPTVPSSQPPLQPTVPSPQSYNYKGACST) is disordered. Residues 188–201 (LPQYQQTPLQPTVP) show a composition bias toward low complexity. The span at 203-212 (SQPPLQPTVP) shows a compositional bias: pro residues. Polar residues predominate over residues 213-225 (SPQSYNYKGACST).

As to expression, component of the acid-soluble organic matrix of calcified layers of the shell (at protein level).

The protein resides in the secreted. The polypeptide is Perlwapin-like protein (Lottia gigantea (Giant owl limpet)).